Consider the following 907-residue polypeptide: Eukaryotic translation initiation factor 4 gamma 2 (907 aa).

An N-acetylmethionine modification is found at methionine 1. The segment at 1 to 71 (MESAIAEGGA…SAANNSANEK (71 aa)) is disordered. Position 11 is a phosphoserine (serine 11). In terms of domain architecture, MIF4G spans 78-308 (FRKVRGILNK…QDTVELREHH (231 aa)). Residue threonine 89 is modified to Phosphothreonine. Residue arginine 360 is modified to Omega-N-methylarginine. The residue at position 395 (serine 395) is a Phosphoserine. N6-methyllysine is present on lysine 431. Phosphoserine is present on serine 443. Positions 498–541 (PPSAQPPRTQTPPLGQTPQLGLKTNPPLIQEKPAKTSKKPPPSK) are disordered. The segment covering 503 to 516 (PPRTQTPPLGQTPQ) has biased composition (polar residues). Arginine 505 is modified (omega-N-methylarginine). A phosphothreonine mark is found at threonine 508 and threonine 514. In terms of domain architecture, MI spans 543–666 (ELLKLTETVV…SISELAQPLE (124 aa)). Lysine 575 is covalently cross-linked (Glycyl lysine isopeptide (Lys-Gly) (interchain with G-Cter in SUMO2)). The W2 domain maps to 720–904 (EGKGLSFLFP…ETAEEEESEE (185 aa)). Phosphoserine is present on serine 902.

This sequence belongs to the eukaryotic initiation factor 4G family. Interacts with the serine/threonine protein kinases MKNK1 and MKNK2. Binds EIF4A and EIF3. Interacts with MIF4GD. Interacts with DAZAP2. Phosphorylation; hyperphosphorylated during mitosis.

In terms of biological role, appears to play a role in the switch from cap-dependent to IRES-mediated translation during mitosis, apoptosis and viral infection. Cleaved by some caspases and viral proteases. The polypeptide is Eukaryotic translation initiation factor 4 gamma 2 (EIF4G2) (Bos taurus (Bovine)).